We begin with the raw amino-acid sequence, 215 residues long: Vacuolar ATPase assembly integral membrane protein VPH2 (215 aa).

Residues 1–134 (MFEIKLNDRI…SQINKQIKEQ (134 aa)) lie on the Cytoplasmic side of the membrane. Residues 135–155 (VTTVFNVLVSVISVVVAIWYW) form a helical membrane-spanning segment. The Lumenal portion of the chain corresponds to 156–167 (TGSSTNFPVHVR). Residues 168–186 (LLLCLFFGILVLVADVVVY) traverse the membrane as a helical segment. Residues 187 to 215 (NSYLKKLEEAKVKEKTKVEKKKVLSKITL) lie on the Cytoplasmic side of the membrane.

It is found in the endoplasmic reticulum membrane. In terms of biological role, required for vacuolar ATPase assembly. This Saccharomyces cerevisiae (strain ATCC 204508 / S288c) (Baker's yeast) protein is Vacuolar ATPase assembly integral membrane protein VPH2 (VPH2).